A 487-amino-acid chain; its full sequence is N-succinylglutamate 5-semialdehyde dehydrogenase (487 aa).

Residue 221–226 (GSSDTG) coordinates NAD(+). Catalysis depends on residues Glu244 and Cys278.

The protein belongs to the aldehyde dehydrogenase family. AstD subfamily.

It catalyses the reaction N-succinyl-L-glutamate 5-semialdehyde + NAD(+) + H2O = N-succinyl-L-glutamate + NADH + 2 H(+). Its pathway is amino-acid degradation; L-arginine degradation via AST pathway; L-glutamate and succinate from L-arginine: step 4/5. Functionally, catalyzes the NAD-dependent reduction of succinylglutamate semialdehyde into succinylglutamate. The chain is N-succinylglutamate 5-semialdehyde dehydrogenase from Burkholderia ambifaria (strain ATCC BAA-244 / DSM 16087 / CCUG 44356 / LMG 19182 / AMMD) (Burkholderia cepacia (strain AMMD)).